A 468-amino-acid chain; its full sequence is UDP-N-acetylmuramate--L-alanine ligase (468 aa).

112–118 (GTHGKTT) is an ATP binding site.

Belongs to the MurCDEF family.

It is found in the cytoplasm. It catalyses the reaction UDP-N-acetyl-alpha-D-muramate + L-alanine + ATP = UDP-N-acetyl-alpha-D-muramoyl-L-alanine + ADP + phosphate + H(+). It participates in cell wall biogenesis; peptidoglycan biosynthesis. Cell wall formation. This is UDP-N-acetylmuramate--L-alanine ligase from Bordetella avium (strain 197N).